Consider the following 93-residue polypeptide: UPF0367 protein ssl1972 (93 aa).

This sequence belongs to the UPF0367 family.

The protein is UPF0367 protein ssl1972 of Synechocystis sp. (strain ATCC 27184 / PCC 6803 / Kazusa).